The following is a 717-amino-acid chain: Delta-1-pyrroline-5-carboxylate synthase (717 aa).

Positions 1 to 296 (METVDSTRAF…WASIGETDAR (296 aa)) are glutamate 5-kinase. 3 residues coordinate substrate: serine 60, aspartate 157, and asparagine 176. ATP is bound by residues 196–197 (SD) and 236–242 (RGGMTAK). The segment at 297–717 (EMAVAARACS…YSHKDLTQQG (421 aa)) is gamma-glutamyl phosphate reductase.

It in the N-terminal section; belongs to the glutamate 5-kinase family. The protein in the C-terminal section; belongs to the gamma-glutamyl phosphate reductase family. In terms of tissue distribution, expressed at high levels in leaves and is inducible in roots subjected to salt stress.

It catalyses the reaction L-glutamate + ATP = L-glutamyl 5-phosphate + ADP. It carries out the reaction L-glutamate 5-semialdehyde + phosphate + NADP(+) = L-glutamyl 5-phosphate + NADPH + H(+). Its pathway is amino-acid biosynthesis; L-proline biosynthesis; L-glutamate 5-semialdehyde from L-glutamate: step 1/2. It functions in the pathway amino-acid biosynthesis; L-proline biosynthesis; L-glutamate 5-semialdehyde from L-glutamate: step 2/2. Feedback regulated by proline. In terms of biological role, P5CS plays a key role in proline biosynthesis, leading to osmoregulation in plants. This Solanum lycopersicum (Tomato) protein is Delta-1-pyrroline-5-carboxylate synthase (PRO2).